The sequence spans 153 residues: MASGQQERSELDRMAREGETVVPGGTGGKTLEAQEHLAEGRSRGGQTRKEQLGEEGYREMGHKGGETRKEQLGEEGYREMGHKGGETRKEQLGEEGYREMGHKGGETRKEQMGEEGYREMGRKGGLSTMNESGGERAAREGIDIDESKFKTKS.

The tract at residues 1–153 is disordered; that stretch reads MASGQQERSE…IDESKFKTKS (153 aa). Composition is skewed to basic and acidic residues over residues 7–19, 32–122, and 133–153; these read ERSE…REGE, EAQE…EMGR, and GGER…KTKS. 4 tandem repeats follow at residues 43–62, 63–82, 83–102, and 103–122. Residues 43–122 form a 4 X 20 AA tandem repeats region; the sequence is RGGQTRKEQL…GEEGYREMGR (80 aa).

The protein belongs to the small hydrophilic plant seed protein family.

Its function is as follows. Lea proteins are late embryonic proteins abundant in higher plant seed embryos. The sequence is that of Late embryogenesis abundant protein B19.4 (B19.4) from Hordeum vulgare (Barley).